Consider the following 512-residue polypeptide: MIKDMIDSIEQFAQTQADFPVYDCLGERRTYGQLKRDSDSIAALIDSLALLAKSPVLVFGAQTYDMLATFVALTKSGHAYIPVDVHSAPERILAIIEIAKPSLIIAIEEFPLTIEGISLVSLSEIESAKLAEMPYERTHSVKGDDNYYIIFTSGTTGQPKGVQISHDNLLSFTNWMIEDAAFDVPKQPQMLAQPPYSFDLSVMYWAPTLALGGTLFALPKELVADFKQLFTTIAQLPVGIWTSTPSFADMAMLSDDFCQAKMPALTHFYFDGEELTVSTARKLFERFPSAKIINAYGPTEATVALSAIEITREMVDNYTRLPIGYPKPDSPTYIIDEDGKELSSGEQGEIIVTGPAVSKGYLNNPEKTAEAFFTFKGQPAYHTGDIGSLTEDNILLYGGRLDFQIKYAGYRIELEDVSQQLNQSPMVASAVAVPRYNKEHKVQNLLAYIVVKDGVKERFDRELELTKAIKASVKDHMMSYMMPSKFLYRDSLPLTPNGKIDIKTLINEVNNR.

152–153 (TS) is an ATP binding site. Aspartate 199 lines the D-alanine pocket. Residue 294 to 299 (NAYGPT) participates in ATP binding. Residue valine 303 coordinates D-alanine. Residues aspartate 385, 397–400 (YGGR), and lysine 499 each bind ATP. Residue lysine 499 coordinates D-alanine.

The protein belongs to the ATP-dependent AMP-binding enzyme family. DltA subfamily.

It localises to the cytoplasm. It catalyses the reaction holo-[D-alanyl-carrier protein] + D-alanine + ATP = D-alanyl-[D-alanyl-carrier protein] + AMP + diphosphate. It participates in cell wall biogenesis; lipoteichoic acid biosynthesis. Catalyzes the first step in the D-alanylation of lipoteichoic acid (LTA), the activation of D-alanine and its transfer onto the D-alanyl carrier protein (Dcp) DltC. In an ATP-dependent two-step reaction, forms a high energy D-alanyl-AMP intermediate, followed by transfer of the D-alanyl residue as a thiol ester to the phosphopantheinyl prosthetic group of the Dcp. D-alanylation of LTA plays an important role in modulating the properties of the cell wall in Gram-positive bacteria, influencing the net charge of the cell wall. This chain is D-alanine--D-alanyl carrier protein ligase, found in Streptococcus pyogenes serotype M3 (strain SSI-1).